We begin with the raw amino-acid sequence, 263 residues long: tRNA pseudouridine synthase A (263 aa).

Aspartate 53 functions as the Nucleophile in the catalytic mechanism. Tyrosine 111 is a binding site for substrate. The disordered stretch occupies residues 232–263 (TAPGHGLISGRSNMTNGKLENNKTTNPCVTKY). Residues 241 to 263 (GRSNMTNGKLENNKTTNPCVTKY) show a composition bias toward polar residues.

This sequence belongs to the tRNA pseudouridine synthase TruA family. As to quaternary structure, homodimer.

The catalysed reaction is uridine(38/39/40) in tRNA = pseudouridine(38/39/40) in tRNA. Functionally, formation of pseudouridine at positions 38, 39 and 40 in the anticodon stem and loop of transfer RNAs. In Halalkalibacterium halodurans (strain ATCC BAA-125 / DSM 18197 / FERM 7344 / JCM 9153 / C-125) (Bacillus halodurans), this protein is tRNA pseudouridine synthase A.